Consider the following 306-residue polypeptide: MEEVLKLKIPASTANLGVGFDSIGMALDKYLHMSIRKIERSNWEFLYYSSELEGLPKDENNYIYQTALNVAHKYNVTLPSLQIEMRSDIPLARGLGSSASALVGALFIANYFGNIQLSKYELLQLATEIEGHPDNVAPTIYGGLIAGFYNPITKITDVARIEVPHVDIILTIPPYELRTEDSRRVLPDTFSHKGAVQNSAISNTMICALIQHKYKLAGKMMEQDGFHEPYRQHLIPEFNQVRKLSRQHDAYATVISGAGPTILTLCPKEKSGKLVRTLREKINNCASELVTINEIGVKDEVVYLKS.

An ATP-binding site is contributed by 90-100 (PLARGLGSSAS).

This sequence belongs to the GHMP kinase family. Homoserine kinase subfamily.

It localises to the cytoplasm. The catalysed reaction is L-homoserine + ATP = O-phospho-L-homoserine + ADP + H(+). The protein operates within amino-acid biosynthesis; L-threonine biosynthesis; L-threonine from L-aspartate: step 4/5. Catalyzes the ATP-dependent phosphorylation of L-homoserine to L-homoserine phosphate. In Staphylococcus epidermidis (strain ATCC 12228 / FDA PCI 1200), this protein is Homoserine kinase.